Consider the following 869-residue polypeptide: Phenylalanine--tRNA ligase beta subunit (869 aa).

The 122-residue stretch at 41 to 162 (SQVTGPIVVG…QYGFSEAEYE (122 aa)) folds into the tRNA-binding domain. The B5 domain occupies 443 to 519 (PRAKAIHFKA…RLVGYDQIPI (77 aa)). 4 residues coordinate Mg(2+): Asp-497, Asp-503, Glu-506, and Glu-507. An FDX-ACB domain is found at 776 to 868 (STFPPVKQDL…EAAEIGAQLR (93 aa)).

The protein belongs to the phenylalanyl-tRNA synthetase beta subunit family. Type 1 subfamily. Tetramer of two alpha and two beta subunits. The cofactor is Mg(2+).

Its subcellular location is the cytoplasm. It carries out the reaction tRNA(Phe) + L-phenylalanine + ATP = L-phenylalanyl-tRNA(Phe) + AMP + diphosphate + H(+). The polypeptide is Phenylalanine--tRNA ligase beta subunit (Bifidobacterium longum (strain NCC 2705)).